We begin with the raw amino-acid sequence, 22 residues long: Heliocin (22 aa).

Position 1 is a pyrrolidone carboxylic acid (Gln-1). Positions 1-22 (QRFIHPTYRPPPQPRRPVIMRA) are disordered. An O-linked (GalNAc...) threonine glycan is attached at Thr-7.

In terms of assembly, monomer. As to expression, hemolymph.

The protein resides in the secreted. Functionally, has antibacterial activity, preferentially against Gram-negative bacteria. The polypeptide is Heliocin (Heliothis virescens (Tobacco budworm moth)).